A 154-amino-acid polypeptide reads, in one-letter code: Urease accessory protein UreE (154 aa).

A disordered region spans residues 135–154; sequence YGHGRTFGHDHGHAHDHHHA.

The protein belongs to the UreE family.

It is found in the cytoplasm. In terms of biological role, involved in urease metallocenter assembly. Binds nickel. Probably functions as a nickel donor during metallocenter assembly. The sequence is that of Urease accessory protein UreE from Paracoccus denitrificans (strain Pd 1222).